A 171-amino-acid chain; its full sequence is Large ribosomal subunit protein bL9 (171 aa).

The protein belongs to the bacterial ribosomal protein bL9 family.

Binds to the 23S rRNA. This chain is Large ribosomal subunit protein bL9, found in Rickettsia akari (strain Hartford).